Here is a 230-residue protein sequence, read N- to C-terminus: Ribonuclease 3 (230 aa).

Residues 5–125 enclose the RNase III domain; that stretch reads YSRFYNILGY…VIGAIYLDSD (121 aa). Glutamate 40 contributes to the Mg(2+) binding site. The active site involves aspartate 44. The Mg(2+) site is built by aspartate 111 and glutamate 114. The active site involves glutamate 114. Residues 153-223 enclose the DRBM domain; it reads DSKSKLQEIL…AEKMIEMLSQ (71 aa).

The protein belongs to the ribonuclease III family. In terms of assembly, homodimer. Requires Mg(2+) as cofactor.

It localises to the cytoplasm. It carries out the reaction Endonucleolytic cleavage to 5'-phosphomonoester.. In terms of biological role, digests double-stranded RNA. Involved in the processing of primary rRNA transcript to yield the immediate precursors to the large and small rRNAs (23S and 16S). Processes some mRNAs, and tRNAs when they are encoded in the rRNA operon. Processes pre-crRNA and tracrRNA of type II CRISPR loci if present in the organism. This chain is Ribonuclease 3, found in Francisella tularensis subsp. holarctica (strain FTNF002-00 / FTA).